We begin with the raw amino-acid sequence, 251 residues long: Triosephosphate isomerase (251 aa).

N9 to K11 contributes to the substrate binding site. Catalysis depends on H94, which acts as the Electrophile. The Proton acceptor role is filled by E166. Substrate-binding positions include G172, S211, and G232 to G233.

This sequence belongs to the triosephosphate isomerase family. Homodimer.

The protein localises to the cytoplasm. The enzyme catalyses D-glyceraldehyde 3-phosphate = dihydroxyacetone phosphate. The protein operates within carbohydrate biosynthesis; gluconeogenesis. Its pathway is carbohydrate degradation; glycolysis; D-glyceraldehyde 3-phosphate from glycerone phosphate: step 1/1. Involved in the gluconeogenesis. Catalyzes stereospecifically the conversion of dihydroxyacetone phosphate (DHAP) to D-glyceraldehyde-3-phosphate (G3P). The polypeptide is Triosephosphate isomerase (Stenotrophomonas maltophilia (strain R551-3)).